We begin with the raw amino-acid sequence, 507 residues long: Probable cytosol aminopeptidase (507 aa).

Mn(2+)-binding residues include lysine 271 and aspartate 276. The active site involves lysine 283. Aspartate 294, aspartate 353, and glutamate 355 together coordinate Mn(2+). Residue arginine 357 is part of the active site.

The protein belongs to the peptidase M17 family. It depends on Mn(2+) as a cofactor.

It localises to the cytoplasm. The enzyme catalyses Release of an N-terminal amino acid, Xaa-|-Yaa-, in which Xaa is preferably Leu, but may be other amino acids including Pro although not Arg or Lys, and Yaa may be Pro. Amino acid amides and methyl esters are also readily hydrolyzed, but rates on arylamides are exceedingly low.. The catalysed reaction is Release of an N-terminal amino acid, preferentially leucine, but not glutamic or aspartic acids.. Presumably involved in the processing and regular turnover of intracellular proteins. Catalyzes the removal of unsubstituted N-terminal amino acids from various peptides. This is Probable cytosol aminopeptidase from Nitratidesulfovibrio vulgaris (strain ATCC 29579 / DSM 644 / CCUG 34227 / NCIMB 8303 / VKM B-1760 / Hildenborough) (Desulfovibrio vulgaris).